The primary structure comprises 286 residues: Elongation factor Ts (286 aa).

An involved in Mg(2+) ion dislocation from EF-Tu region spans residues 82 to 85; sequence TDFV.

The protein belongs to the EF-Ts family.

The protein localises to the cytoplasm. Associates with the EF-Tu.GDP complex and induces the exchange of GDP to GTP. It remains bound to the aminoacyl-tRNA.EF-Tu.GTP complex up to the GTP hydrolysis stage on the ribosome. The polypeptide is Elongation factor Ts (Hamiltonella defensa subsp. Acyrthosiphon pisum (strain 5AT)).